Reading from the N-terminus, the 287-residue chain is Cell division protein ZipA (287 aa).

Residue methionine 1 is a topological domain, periplasmic. Residues glutamate 2 to phenylalanine 22 form a helical membrane-spanning segment. Residues aspartate 23–arginine 287 lie on the Cytoplasmic side of the membrane. The segment at leucine 70 to proline 143 is disordered.

The protein belongs to the ZipA family. Interacts with FtsZ via their C-terminal domains.

It is found in the cell inner membrane. Essential cell division protein that stabilizes the FtsZ protofilaments by cross-linking them and that serves as a cytoplasmic membrane anchor for the Z ring. Also required for the recruitment to the septal ring of downstream cell division proteins. The polypeptide is Cell division protein ZipA (Pseudomonas fluorescens (strain SBW25)).